The following is a 159-amino-acid chain: Phosphopantetheine adenylyltransferase (159 aa).

A substrate-binding site is contributed by threonine 10. Residues 10–11 and histidine 18 each bind ATP; that span reads TF. Residues lysine 42, methionine 74, and arginine 88 each contribute to the substrate site. Residues 89–91, glutamate 99, and 124–130 contribute to the ATP site; these read GLR and WSFISSS.

The protein belongs to the bacterial CoaD family. As to quaternary structure, homohexamer. Mg(2+) is required as a cofactor.

Its subcellular location is the cytoplasm. It carries out the reaction (R)-4'-phosphopantetheine + ATP + H(+) = 3'-dephospho-CoA + diphosphate. Its pathway is cofactor biosynthesis; coenzyme A biosynthesis; CoA from (R)-pantothenate: step 4/5. Reversibly transfers an adenylyl group from ATP to 4'-phosphopantetheine, yielding dephospho-CoA (dPCoA) and pyrophosphate. The protein is Phosphopantetheine adenylyltransferase of Yersinia enterocolitica serotype O:8 / biotype 1B (strain NCTC 13174 / 8081).